A 121-amino-acid polypeptide reads, in one-letter code: Keratin-associated protein 1-4 (121 aa).

Belongs to the KRTAP type 1 family. As to quaternary structure, interacts with hair keratins. Expressed in the middle/upper portions of the hair cortex, in the region termed the keratogenous zone.

Functionally, in the hair cortex, hair keratin intermediate filaments are embedded in an interfilamentous matrix, consisting of hair keratin-associated proteins (KRTAP), which are essential for the formation of a rigid and resistant hair shaft through their extensive disulfide bond cross-linking with abundant cysteine residues of hair keratins. The matrix proteins include the high-sulfur and high-glycine-tyrosine keratins. In Homo sapiens (Human), this protein is Keratin-associated protein 1-4 (KRTAP1-4).